The sequence spans 500 residues: Lycopene beta cyclase, chloroplastic (500 aa).

The transit peptide at 1-81 (MDTLLKTPNN…ELPMYDPSKG (81 aa)) directs the protein to the chloroplast. 86 to 114 (LAVVGGGPAGLAVAQQVSEAGLSVCSIDP) provides a ligand contact to NAD(+).

It belongs to the lycopene cyclase family.

The protein localises to the plastid. The protein resides in the chloroplast. It carries out the reaction a carotenoid psi-end group = a carotenoid beta-end derivative. Its pathway is carotenoid biosynthesis; beta-carotene biosynthesis. The protein operates within carotenoid biosynthesis; beta-zeacarotene biosynthesis. Catalyzes the double cyclization reaction which converts lycopene to beta-carotene and neurosporene to beta-zeacarotene. This is Lycopene beta cyclase, chloroplastic (LCY1) from Solanum lycopersicum (Tomato).